The following is a 410-amino-acid chain: Regulator of microtubule dynamics protein 2 (410 aa).

Residues 9–28 (LILGIMVGTAGISLLLLWYH) form a helical membrane-spanning segment. Position 51 is a phosphoserine (serine 51). A coiled-coil region spans residues 68–110 (FQERQLQILEKLNELLTNMEELKEEIRFLKEAIPKLEEYIQDE). Phosphoserine is present on serine 121. Positions 122–131 (PQHRARKRRL) are enriched in basic residues. The interval 122–164 (PQHRARKRRLPTIQSSATSNSSEEAESEGGYITANTDTEEQSF) is disordered. Threonine 139 carries the post-translational modification Phosphothreonine. Phosphotyrosine is present on tyrosine 152. Phosphothreonine is present on residues threonine 154 and threonine 157.

It belongs to the RMDN family. Interacts with microtubules.

The protein localises to the membrane. It is found in the cytoplasm. It localises to the cytoskeleton. The protein resides in the spindle. Its subcellular location is the spindle pole. In Homo sapiens (Human), this protein is Regulator of microtubule dynamics protein 2 (RMDN2).